Reading from the N-terminus, the 140-residue chain is Histone H3-like centromeric protein A (140 aa).

A disordered region spans residues 1-46 (MGPRRRSRKPEAPRRRSPSPTPTPGPSRRGPSLGASSHQHSRRRQG). Position 2 is a n,N,N-trimethylglycine (Gly2). At Ser7 the chain carries Phosphoserine; by AURKA and AURKB. 3 positions are modified to phosphoserine: Ser17, Ser19, and Ser27. The segment covering 26–37 (PSRRGPSLGASS) has biased composition (low complexity). The segment at 39–54 (QHSRRRQGWLKEIRKL) is important for flexibility of DNA ends that protrude from nucleosomes. Ser68 carries the post-translational modification Phosphoserine. The tract at residues 75-116 (CVKFTRGVDFNWQAQALLALQEAAEAFLVHLFEDAYLLTLHA) is CATD.

The protein belongs to the histone H3 family. As to quaternary structure, component of centromeric nucleosomes, where DNA is wrapped around a histone octamer core. The octamer contains two molecules each of H2A, H2B, CENPA and H4 assembled in one CENPA-H4 heterotetramer and two H2A-H2B heterodimers. CENPA modulates the DNA-binding characteristics of nucleosomes so that protruding DNA ends have higher flexibility than in nucleosomes containing conventional histone H3. Inhibits binding of histone H1 to nucleosomes, since histone H1 binds preferentially to rigid DNA linkers that protrude from nucleosomes. Nucleosomes containing CENPA also contain histone H2A variants such as MACROH2A and H2A.Z/H2AZ1. The CENPA-H4 heterotetramer is more compact and structurally more rigid than corresponding H3-H4 heterotetramers. Can assemble into nucleosomes that contain both CENPA and histone H3.3; these nucleosomes interact with a single CENPC chain. Heterotrimer composed of HJURP, CENPA and histone H4, where HJURP interacts with the dimer formed by CENPA and histone H4 and prevents tetramerization of CENPA and H4. Component of the CENPA-NAC complex, at least composed of CENPA, CENPC, CENPH, CENPM, CENPN, CENPT and CENPU. Interacts (via CATD domain) with HJURP; the interaction is direct and is required for its localization to centromeres. Interacts with CENPC, CENPN and CENPT; interaction is direct. Part of a centromere complex consisting of CENPA, CENPT and CENPW. Identified in centromere complexes containing histones H2A, H2B and H4, and at least CENPA, CENPB, CENPC, CENPT, CENPN, HJURP, SUPT16H, SSRP1 and RSF1. Can self-associate. The CENPA-H4 heterotetramer can bind DNA by itself (in vitro). Interacts with CDK1, PPP1CA and RBBP7. In terms of assembly, (Microbial infection) Interacts directly with herpes virus HHV-1 protein ICP0. Post-translationally, ubiquitinated. Interaction with herpes virus HSV-1 ICP0 protein, leads to its degradation by the proteasome pathway. Trimethylated by NTMT1 at the N-terminal glycine after cleavage of Met-1. Methylation is low before incorporation into nucleosomes and increases with cell cycle progression, with the highest levels in mitotic nucleosomes. In terms of processing, phosphorylated by CDK1 at Ser-68 during early mitosis; this abolishes association with chromatin and centromeres, prevents interaction with HJURP and thereby prevents premature assembly of CENPA into centromeres. Dephosphorylated at Ser-68 by PPP1CA during late mitosis. Phosphorylation of Ser-7 by AURKA and AURKB during prophase is required for localization of AURKA and AURKB at inner centromere and is essential for normal cytokinesis. Initial phosphorylation during prophase is mediated by AURKA and is maintained by AURKB. Post-translationally, poly-ADP-ribosylated by PARP1.

The protein localises to the nucleus. Its subcellular location is the chromosome. It is found in the centromere. Histone H3-like nucleosomal protein that is specifically found in centromeric nucleosomes. Replaces conventional H3 in the nucleosome core of centromeric chromatin that serves as an assembly site for the inner kinetochore. The presence of CENPA subtly modifies the nucleosome structure and the way DNA is wrapped around the nucleosome and gives rise to protruding DNA ends that are less well-ordered and rigid compared to nucleosomes containing histone H3. May serve as an epigenetic mark that propagates centromere identity through replication and cell division. Required for recruitment and assembly of kinetochore proteins, and as a consequence required for progress through mitosis, chromosome segregation and cytokinesis. This Homo sapiens (Human) protein is Histone H3-like centromeric protein A (CENPA).